The sequence spans 471 residues: 3-hydroxylaminophenol mutase (471 aa).

Positions 15–100 (NDVKFVDFRF…TCDVVEPSDG (86 aa)) constitute a GS beta-grasp domain. The region spanning 107–471 (PRSIAKRAEA…PVEFEMYYSL (365 aa)) is the GS catalytic domain.

It belongs to the glutamine synthetase family.

It carries out the reaction 3-hydroxyaminophenol = aminohydroquinone. With respect to regulation, is inhibited by H(2)O(2). 1,10-phenanthroline inhibits the activity slightly, but other metal cation chelators such as EDTA or tiron have no effect on the activity. Divalent metal cations and hydroxylamine have also no effect on the activity. Due to the relationship of the protein with glutamine synthetases, glutamate and glutamine were tested as inhibitors; neither preincubation of the compounds with the enzyme nor their addition to the assay buffer affected 3HAP mutase activity. In terms of biological role, catalyzes the isomerization of 3-hydroxylaminophenol (3HAP) to aminohydroquinone, a step in the degradative pathway of 3-nitrophenol. The enzymatic reaction is regiospecific since it leads to the formation of aminohydroquinone exclusively, without producing the isomeric 4-aminocatechol. Can also isomerize other hydroxylaminoaromatic compounds, such as hydroxylaminobenzene to a mixture of 2-aminophenol and 4-aminophenol, 4-hydroxylaminotoluene to 6-amino-m-cresol, and 2-chloro-5-hydroxylaminophenol to 2-amino-5-chlorohydroquinone. Does not act on 4-hydroxylaminobenzoate. The protein is 3-hydroxylaminophenol mutase of Cupriavidus pinatubonensis (strain JMP 134 / LMG 1197) (Cupriavidus necator (strain JMP 134)).